The chain runs to 167 residues: Seroin (167 aa).

Positions 1-17 (MATKILIFLSFVALSSA) are cleaved as a signal peptide. The N-linked (GlcNAc...) asparagine glycan is linked to N26. 5 consecutive repeat copies span residues 38–46 (PPLPQPPPL), 56–64 (PPLPQPPPL), 76–78 (PPI), 79–81 (PPI), and 82–84 (PPI). The disordered stretch occupies residues 145-167 (VNETIVGDNPPKFEESRKESSSN). An N-linked (GlcNAc...) asparagine glycan is attached at N146. The span at 155–167 (PKFEESRKESSSN) shows a compositional bias: basic and acidic residues.

Produced by both the posterior (PSG) and middle (MSG) sections of silk glands.

The protein resides in the secreted. This is Seroin from Galleria mellonella (Greater wax moth).